Here is a 104-residue protein sequence, read N- to C-terminus: Large ribosomal subunit protein bL21 (104 aa).

This sequence belongs to the bacterial ribosomal protein bL21 family. As to quaternary structure, part of the 50S ribosomal subunit. Contacts protein L20.

Its function is as follows. This protein binds to 23S rRNA in the presence of protein L20. In Agrobacterium fabrum (strain C58 / ATCC 33970) (Agrobacterium tumefaciens (strain C58)), this protein is Large ribosomal subunit protein bL21.